The primary structure comprises 465 residues: Phenylalanine--tRNA ligase alpha subunit (465 aa).

L-phenylalanine is bound by residues T309, 348-350 (QLD), and F388. E390 contributes to the Mg(2+) binding site.

This sequence belongs to the class-II aminoacyl-tRNA synthetase family. Phe-tRNA synthetase alpha subunit type 2 subfamily. In terms of assembly, tetramer of two alpha and two beta subunits. Requires Mg(2+) as cofactor.

The protein resides in the cytoplasm. The enzyme catalyses tRNA(Phe) + L-phenylalanine + ATP = L-phenylalanyl-tRNA(Phe) + AMP + diphosphate + H(+). This chain is Phenylalanine--tRNA ligase alpha subunit, found in Sulfolobus acidocaldarius (strain ATCC 33909 / DSM 639 / JCM 8929 / NBRC 15157 / NCIMB 11770).